The sequence spans 144 residues: Large ribosomal subunit protein uL16 (144 aa).

Residues 1-19 (MLLPKRVKYRRQHRPKTTG) are compositionally biased toward basic residues. A disordered region spans residues 1-23 (MLLPKRVKYRRQHRPKTTGRSKG).

Belongs to the universal ribosomal protein uL16 family. Part of the 50S ribosomal subunit.

In terms of biological role, binds 23S rRNA and is also seen to make contacts with the A and possibly P site tRNAs. This chain is Large ribosomal subunit protein uL16, found in Staphylococcus aureus (strain Mu50 / ATCC 700699).